The chain runs to 571 residues: MRTSNYLLSTLKETPNDAEVVSHKLMLRAGMIRKLASGLYTWLPTGLRVLRKVENIVRQEIDNAGAIETLMPVVQPFELWEETGRSEKMGPELLRFTDRHERPFVLSPTAEEVITALVRNEVSSYKQLPLNLYQIQTKFRDERRPRFGVMRAREFCMMDAYSFDIDKAGLEKSYEAMHVAYCKAFDRMGLDYRPVLADTGAIGGNGSHEFHVLAESGEDLIAFSTESDYAANIEKAEAVAPAIERPAPTQAMTLVDTPNAKTIAELVEQHGLPIEKTVKTLFVKASDEIDAPIVALIIRGDHELNEIKAEKLAEVASPLEMASEEEIRALIGAGPGSLGPVGLKLPFIVDRTVAVMNDFGAGANIDGKHYFGINWGRDVELGKVEDLRNVVEGDPSPCGKGTLMLKRGIEVGHIFQLGTNYSEKMNCGVLDSNGKNVILEMGCYGIGVSRVVAAAIEQNHDDYGIIWPDAIAPFQVAIVPMNMHKSERVQQAAEKLYAELTAAGIEVLFDDRKERPGVMFSDMELIGVPHTIIIGDRSMDEGHFEYKNRRQGEKEAVAMESIIDFIQAKLA.

It belongs to the class-II aminoacyl-tRNA synthetase family. ProS type 1 subfamily. Homodimer.

It localises to the cytoplasm. It catalyses the reaction tRNA(Pro) + L-proline + ATP = L-prolyl-tRNA(Pro) + AMP + diphosphate. In terms of biological role, catalyzes the attachment of proline to tRNA(Pro) in a two-step reaction: proline is first activated by ATP to form Pro-AMP and then transferred to the acceptor end of tRNA(Pro). As ProRS can inadvertently accommodate and process non-cognate amino acids such as alanine and cysteine, to avoid such errors it has two additional distinct editing activities against alanine. One activity is designated as 'pretransfer' editing and involves the tRNA(Pro)-independent hydrolysis of activated Ala-AMP. The other activity is designated 'posttransfer' editing and involves deacylation of mischarged Ala-tRNA(Pro). The misacylated Cys-tRNA(Pro) is not edited by ProRS. In Vibrio cholerae serotype O1 (strain ATCC 39541 / Classical Ogawa 395 / O395), this protein is Proline--tRNA ligase.